Consider the following 445-residue polypeptide: T-box transcription factor TBX20 (445 aa).

A DNA-binding region (T-box) is located at residues 108–287 (LWDKFHELGT…SNPFAKGFRD (180 aa)). A disordered region spans residues 318–337 (EEDVLGEESQTTQSRGSAFT). Residues 325 to 337 (ESQTTQSRGSAFT) are compositionally biased toward polar residues.

As to expression, prominently expressed in the extraembryonic mesoderm, developing heart, eye analage and motor neurons of hindbrain and spinal cord. Expressed in extraembryonic tissues such as the amnion and allantois.

The protein resides in the nucleus. Functionally, acts as a transcriptional activator and repressor required for cardiac development and may have key roles in the maintenance of functional and structural phenotypes in adult heart. The protein is T-box transcription factor TBX20 (Tbx20) of Mus musculus (Mouse).